We begin with the raw amino-acid sequence, 89 residues long: Protein S100-A8 (89 aa).

2 consecutive EF-hand domains span residues Ile13 to Asn48 and Val46 to Ala81. Zn(2+)-binding residues include His17 and His27. A Ca(2+)-binding site is contributed by Asp33. Cys42 bears the S-nitrosocysteine mark. Ca(2+) contacts are provided by Asp59, Asn61, Asp63, and Glu70. A Zn(2+)-binding site is contributed by His83.

Belongs to the S-100 family. In terms of assembly, homodimer. Preferentially exists as a heterodimer or heterotetramer with S100A9 known as calprotectin (S100A8/A9). Calprotectin (S100A8/9) interacts with CEACAM3 and tubulin filaments in a calcium-dependent manner. Heterotetrameric calprotectin (S100A8/A9) interacts with ANXA6 and associates with tubulin filaments in activated monocytes. S100A8 and calprotectin (S100A8/9) interact with NCF2/P67PHOX, RAC1 and RAC2. Calprotectin (S100A8/9) interacts with CYBA and CYBB. S100A8 interacts with AGER, ATP2A2 and with the heterodimeric complex formed by TLR4 and LY96. Calprotectin (S100A8/9) interacts with NOS2 to form the iNOS-S100A8/A9 transnitrosylase complex. Calprotectin (S100A8/9) interacts with CD69.

The protein resides in the secreted. The protein localises to the cytoplasm. It is found in the cytoskeleton. Its subcellular location is the cell membrane. Calprotectin (S100A8/A9) activity on TLR4 signaling is inhibited by paquinimod. In terms of biological role, S100A8 is a calcium- and zinc-binding protein which plays a prominent role in the regulation of inflammatory processes and immune response. It can induce neutrophil chemotaxis and adhesion. Predominantly found as calprotectin (S100A8/A9) which has a wide plethora of intra- and extracellular functions. The intracellular functions include: facilitating leukocyte arachidonic acid trafficking and metabolism, modulation of the tubulin-dependent cytoskeleton during migration of phagocytes and activation of the neutrophilic NADPH-oxidase. Also participates in regulatory T-cell differentiation together with CD69. Activates NADPH-oxidase by facilitating the enzyme complex assembly at the cell membrane, transferring arachidonic acid, an essential cofactor, to the enzyme complex and S100A8 contributes to the enzyme assembly by directly binding to NCF2/P67PHOX. The extracellular functions involve pro-inflammatory, antimicrobial, oxidant-scavenging and apoptosis-inducing activities. Its pro-inflammatory activity includes recruitment of leukocytes, promotion of cytokine and chemokine production, and regulation of leukocyte adhesion and migration. Acts as an alarmin or a danger associated molecular pattern (DAMP) molecule and stimulates innate immune cells via binding to pattern recognition receptors such as Toll-like receptor 4 (TLR4) and receptor for advanced glycation endproducts (AGER). Binding to TLR4 and AGER activates the MAP-kinase and NF-kappa-B signaling pathways resulting in the amplification of the pro-inflammatory cascade. Has antimicrobial activity towards bacteria and fungi and exerts its antimicrobial activity probably via chelation of Zn(2+) which is essential for microbial growth. Can induce cell death via autophagy and apoptosis and this occurs through the cross-talk of mitochondria and lysosomes via reactive oxygen species (ROS) and the process involves BNIP3. Can regulate neutrophil number and apoptosis by an anti-apoptotic effect; regulates cell survival via ITGAM/ITGB and TLR4 and a signaling mechanism involving MEK-ERK. Its role as an oxidant scavenger has a protective role in preventing exaggerated tissue damage by scavenging oxidants. The iNOS-S100A8/A9 transnitrosylase complex is proposed to direct selective inflammatory stimulus-dependent S-nitrosylation of multiple targets such as GAPDH, ANXA5, EZR, MSN and VIM by recognizing a [IL]-x-C-x-x-[DE] motif; S100A8 seems to contribute to S-nitrosylation site selectivity. (Microbial infection) Upon infection by murine coronavirus (MHV-A59), induces expansion of aberrant immature neutrophils in a TLR4-dependent manner. The polypeptide is Protein S100-A8 (Mus musculus (Mouse)).